Reading from the N-terminus, the 101-residue chain is NAD(P)H-quinone oxidoreductase subunit 4L, chloroplastic (101 aa).

Helical transmembrane passes span 2-22 (MFEYALVLSSYLFSMGIYGLI), 32-52 (MCLELILNAVNMNLVTFSDLF), and 61-81 (IFSIFVIAIAAAEAAIGPAIV).

It belongs to the complex I subunit 4L family. As to quaternary structure, NDH is composed of at least 16 different subunits, 5 of which are encoded in the nucleus.

It localises to the plastid. The protein localises to the chloroplast thylakoid membrane. It catalyses the reaction a plastoquinone + NADH + (n+1) H(+)(in) = a plastoquinol + NAD(+) + n H(+)(out). The catalysed reaction is a plastoquinone + NADPH + (n+1) H(+)(in) = a plastoquinol + NADP(+) + n H(+)(out). In terms of biological role, NDH shuttles electrons from NAD(P)H:plastoquinone, via FMN and iron-sulfur (Fe-S) centers, to quinones in the photosynthetic chain and possibly in a chloroplast respiratory chain. The immediate electron acceptor for the enzyme in this species is believed to be plastoquinone. Couples the redox reaction to proton translocation, and thus conserves the redox energy in a proton gradient. This Amborella trichopoda protein is NAD(P)H-quinone oxidoreductase subunit 4L, chloroplastic.